Reading from the N-terminus, the 107-residue chain is Translation initiation factor IF-1, chloroplastic (107 aa).

The S1-like domain maps to 8–83 (REKKNPREAK…SKGRIIYRLP (76 aa)). The tract at residues 81–107 (RLPHKDSKRTEDSKDTEDLKDTKDSKD) is disordered. Residues 83-107 (PHKDSKRTEDSKDTEDLKDTKDSKD) are compositionally biased toward basic and acidic residues.

The protein belongs to the IF-1 family. In terms of assembly, component of the 30S ribosomal translation pre-initiation complex which assembles on the 30S ribosome in the order IF-2 and IF-3, IF-1 and N-formylmethionyl-tRNA(fMet); mRNA recruitment can occur at any time during PIC assembly.

The protein localises to the plastid. The protein resides in the chloroplast. Functionally, one of the essential components for the initiation of protein synthesis. Stabilizes the binding of IF-2 and IF-3 on the 30S subunit to which N-formylmethionyl-tRNA(fMet) subsequently binds. Helps modulate mRNA selection, yielding the 30S pre-initiation complex (PIC). Upon addition of the 50S ribosomal subunit IF-1, IF-2 and IF-3 are released leaving the mature 70S translation initiation complex. In Saccharum hybrid (Sugarcane), this protein is Translation initiation factor IF-1, chloroplastic.